Consider the following 342-residue polypeptide: Ribosomal RNA small subunit methyltransferase C (342 aa).

This sequence belongs to the methyltransferase superfamily. RsmC family. In terms of assembly, monomer.

It localises to the cytoplasm. The catalysed reaction is guanosine(1207) in 16S rRNA + S-adenosyl-L-methionine = N(2)-methylguanosine(1207) in 16S rRNA + S-adenosyl-L-homocysteine + H(+). Its function is as follows. Specifically methylates the guanine in position 1207 of 16S rRNA in the 30S particle. The polypeptide is Ribosomal RNA small subunit methyltransferase C (Enterobacter sp. (strain 638)).